The chain runs to 267 residues: Phosphate import ATP-binding protein PstB 2 (267 aa).

One can recognise an ABC transporter domain in the interval 21-262; sequence LATKDLHVYY…AQCQSTNDYV (242 aa). Residue 53–60 participates in ATP binding; the sequence is GPSGCGKS.

The protein belongs to the ABC transporter superfamily. Phosphate importer (TC 3.A.1.7) family. In terms of assembly, the complex is composed of two ATP-binding proteins (PstB), two transmembrane proteins (PstC and PstA) and a solute-binding protein (PstS).

The protein resides in the cell membrane. It carries out the reaction phosphate(out) + ATP + H2O = ADP + 2 phosphate(in) + H(+). Functionally, part of the ABC transporter complex PstSACB involved in phosphate import. Responsible for energy coupling to the transport system. The polypeptide is Phosphate import ATP-binding protein PstB 2 (Streptococcus pyogenes serotype M18 (strain MGAS8232)).